The chain runs to 164 residues: Ribosomal RNA large subunit methyltransferase H (164 aa).

An S-adenosyl-L-methionine-binding site is contributed by G109.

The protein belongs to the RNA methyltransferase RlmH family. In terms of assembly, homodimer.

The protein localises to the cytoplasm. It carries out the reaction pseudouridine(1915) in 23S rRNA + S-adenosyl-L-methionine = N(3)-methylpseudouridine(1915) in 23S rRNA + S-adenosyl-L-homocysteine + H(+). Specifically methylates the pseudouridine at position 1915 (m3Psi1915) in 23S rRNA. The protein is Ribosomal RNA large subunit methyltransferase H of Methylobacterium radiotolerans (strain ATCC 27329 / DSM 1819 / JCM 2831 / NBRC 15690 / NCIMB 10815 / 0-1).